Reading from the N-terminus, the 515-residue chain is Maturase K (515 aa).

Belongs to the intron maturase 2 family. MatK subfamily.

It is found in the plastid. It localises to the chloroplast. In terms of biological role, usually encoded in the trnK tRNA gene intron. Probably assists in splicing its own and other chloroplast group II introns. The chain is Maturase K from Pinus contorta (Shore pine).